The chain runs to 310 residues: Ribosomal RNA small subunit methyltransferase H (310 aa).

Residues 32–34, Asp51, Phe78, Asp99, and Gln106 each bind S-adenosyl-L-methionine; that span reads AGH.

It belongs to the methyltransferase superfamily. RsmH family.

The protein resides in the cytoplasm. The enzyme catalyses cytidine(1402) in 16S rRNA + S-adenosyl-L-methionine = N(4)-methylcytidine(1402) in 16S rRNA + S-adenosyl-L-homocysteine + H(+). In terms of biological role, specifically methylates the N4 position of cytidine in position 1402 (C1402) of 16S rRNA. The sequence is that of Ribosomal RNA small subunit methyltransferase H from Macrococcus caseolyticus (strain JCSC5402) (Macrococcoides caseolyticum).